The following is a 117-amino-acid chain: Large ribosomal subunit protein uL18 (117 aa).

Belongs to the universal ribosomal protein uL18 family. In terms of assembly, part of the 50S ribosomal subunit; part of the 5S rRNA/L5/L18/L25 subcomplex. Contacts the 5S and 23S rRNAs.

Functionally, this is one of the proteins that bind and probably mediate the attachment of the 5S RNA into the large ribosomal subunit, where it forms part of the central protuberance. The sequence is that of Large ribosomal subunit protein uL18 from Actinobacillus succinogenes (strain ATCC 55618 / DSM 22257 / CCUG 43843 / 130Z).